A 1738-amino-acid polypeptide reads, in one-letter code: Complement C4-B (1738 aa).

A signal peptide spans 1-19; sequence MRLLWGLAWVFSFCASSLQ. Residues cysteine 66 and cysteine 95 are joined by a disulfide bond. An N-linked (GlcNAc...) asparagine glycan is attached at asparagine 224. A disulfide bridge links cysteine 633 with cysteine 667. Positions 674–677 are excised as a propeptide; that stretch reads RQKR. 3 disulfides stabilise this stretch: cysteine 700–cysteine 726, cysteine 701–cysteine 733, and cysteine 714–cysteine 734. The Anaphylatoxin-like domain occupies 700 to 734; that stretch reads CCQDGMTKLPMKRTCEQRAARVPQQACREPFLSCC. Asparagine 743 carries an N-linked (GlcNAc...) asparagine glycan. Positions 1006–1009 form a cross-link, isoglutamyl cysteine thioester (Cys-Gln); the sequence is CAEQ. Asparagine 1324 and asparagine 1387 each carry an N-linked (GlcNAc...) asparagine glycan. Sulfotyrosine occurs at positions 1413, 1416, and 1417. Positions 1444 to 1447 are excised as a propeptide; it reads RRRR. 5 disulfide bridges follow: cysteine 1465-cysteine 1529, cysteine 1577-cysteine 1582, cysteine 1589-cysteine 1667, cysteine 1612-cysteine 1736, and cysteine 1712-cysteine 1721. Residues 1589–1736 enclose the NTR domain; that stretch reads CPRLLRSLER…FLMEFSSRGC (148 aa).

In terms of assembly, in absence of complement activation, circulates in blood as a disulfide-linked trimer of an alpha, beta and gamma chain. As to quaternary structure, complement C4b is composed of complement C4b-A, complement C4 beta and complement C4 gamma chains that are associated via disulfide bonds. Non-enzymatic component of the C3 convertase, also named C4bC2b, composed of the serine protease complement C2b (C2), as well as complement C4b. Non-enzymatic component of the C5 convertase, also named C4bC2bC3b, composed of the serine protease complement C2b (C2), complement C3b, as well as complement C4b. Prior to secretion, the single-chain precursor is enzymatically cleaved by plasminogen (PLG) to yield non-identical chains alpha, beta and gamma. During activation of the complement systems, the alpha chain is cleaved into C4a and C4b by different proteases depending on the complement pathway: C4b stays linked to the beta and gamma chains, while C4a is released in the plasma. The alpha chain is cleaved by C1S to generate C4a and C4b following activation by the classical complement system. The alpha chain is cleaved to generate C4a and C4b by MASP2 following activation by the lectin complement system. The alpha chain is cleaved by GZMK to generate C4a and C4b following activation by the GZMK complement system. Further degradation of C4b by C1 into the inactive fragments C4c and C4d blocks the generation of C3 convertase. The proteolytic cleavages often are incomplete so that many structural forms can be found in plasma. In terms of processing, upon activation, the internal thioester bond reacts with carbohydrate antigens on the target surface to form amide or ester bonds, leading to covalent association with the surface of pathogens. Post-translationally, complement C4b interacts with complement C3b via a thioester linkage.

The protein localises to the secreted. The protein resides in the cell surface. Precursor of non-enzymatic components of the classical, lectin and GZMK complement pathways, which consist in a cascade of proteins that leads to phagocytosis and breakdown of pathogens and signaling that strengthens the adaptive immune system. Functionally, non-enzymatic component of C3 and C5 convertases. Generated following cleavage by complement proteases (C1S, MASP2 or GZMK, depending on the complement pathway), it covalently attaches to the surface of pathogens, where it acts as an opsonin that marks the surface of antigens for removal. It then recruits the serine protease complement C2b to form the C3 and C5 convertases, which cleave and activate C3 and C5, respectively, the next components of the complement pathways. Complement C4b-A isotype is responsible for effective binding to form amide bonds with immune aggregates or protein antigens, while complement C4b-B isotype catalyzes the transacylation of the thioester carbonyl group to form ester bonds with carbohydrate antigens. Its function is as follows. Putative humoral mediator released following cleavage by complement proteases (C1S, MASP2 or GZMK, depending on the complement pathway). While it is strongly similar to anaphylatoxins, its role is unclear. Was reported to act as a mediator of local inflammatory process; however these effects were probably due to contamination with C3a and/C5a anaphylatoxins in biological assays. The polypeptide is Complement C4-B (Mus musculus (Mouse)).